We begin with the raw amino-acid sequence, 712 residues long: MSQEKQVFSIDLAGRQLTVETGQLAKQANGAVLVRYGDTAVLSTATASKEAKNVDFFPLTVNYEERLYAVGKIPGGFIKREGRPSEKAILASRLIDRPIRPLFADGFRNEVQVVNIVMSVDQDCSSEMAAMLGSSLALSISDIPFEGPIAGATVGRINGEFVINPTVEQQEQSDIHLVVAGTKDAINMVEAGADQVPEETMLEAIMFGHDEIKRLIAFQEEIVQAVGKEKSEVKLYEVDADLNQAVREMAEKDMHSAIQVHEKHAREDAINEVKKRVIEHYEAQEADADTLGQVNEILYKIVKEEVRRLITVEKIRPDGRKGDEIRPLASEVGILSRTHGSGLFTRGQTQALSICTLGALGDVQILDGLGVEESKRFMHHYNFPSFSVGETRPMRGPGRREIGHGALGERALEPVIPSEKDFPYTVRLVSEVLESNGSTSQASICGSTLAMMDAGVPLKAPVAGIAMGLVKTGEHYTILSDIQGMEDHLGDMDFKVAGTAHGVTALQMDIKIDGLSREILEEALQQAKVGRVHILNHMLSVIAEPRTELSAYAPKIITMTINPDKIRDVIGPSGKQINKIIEETGVKIDIEQDGTVFISSINQEMNDKAKKIIEDIVREVQVGEIYEGKVKRVEKFGAFVELFSGKDGLVHISELALERVGKVEDVVKIGDVITVKVIEIDKQGRVNLSRKVLLKEEQEKEAAKEENKQEQQ.

Mg(2+) contacts are provided by Asp487 and Asp493. Positions 554-613 (PKIITMTINPDKIRDVIGPSGKQINKIIEETGVKIDIEQDGTVFISSINQEMNDKAKKII) constitute a KH domain. The 69-residue stretch at 623–691 (GEIYEGKVKR…KQGRVNLSRK (69 aa)) folds into the S1 motif domain.

This sequence belongs to the polyribonucleotide nucleotidyltransferase family. It depends on Mg(2+) as a cofactor.

The protein resides in the cytoplasm. It carries out the reaction RNA(n+1) + phosphate = RNA(n) + a ribonucleoside 5'-diphosphate. Involved in mRNA degradation. Catalyzes the phosphorolysis of single-stranded polyribonucleotides processively in the 3'- to 5'-direction. The polypeptide is Polyribonucleotide nucleotidyltransferase (Bacillus anthracis).